The primary structure comprises 445 residues: Probable cytosol aminopeptidase (445 aa).

Mn(2+) contacts are provided by Lys-217 and Asp-222. The active site involves Lys-229. The Mn(2+) site is built by Asp-240, Asp-299, and Glu-301. Arg-303 is a catalytic residue.

The protein belongs to the peptidase M17 family. It depends on Mn(2+) as a cofactor.

The protein resides in the cytoplasm. The catalysed reaction is Release of an N-terminal amino acid, Xaa-|-Yaa-, in which Xaa is preferably Leu, but may be other amino acids including Pro although not Arg or Lys, and Yaa may be Pro. Amino acid amides and methyl esters are also readily hydrolyzed, but rates on arylamides are exceedingly low.. It carries out the reaction Release of an N-terminal amino acid, preferentially leucine, but not glutamic or aspartic acids.. Presumably involved in the processing and regular turnover of intracellular proteins. Catalyzes the removal of unsubstituted N-terminal amino acids from various peptides. This is Probable cytosol aminopeptidase (pepA) from Mycoplasma pneumoniae (strain ATCC 29342 / M129 / Subtype 1) (Mycoplasmoides pneumoniae).